A 343-amino-acid polypeptide reads, in one-letter code: Heat-inducible transcription repressor HrcA (343 aa).

The protein belongs to the HrcA family.

Functionally, negative regulator of class I heat shock genes (grpE-dnaK-dnaJ and groELS operons). Prevents heat-shock induction of these operons. The sequence is that of Heat-inducible transcription repressor HrcA from Halalkalibacterium halodurans (strain ATCC BAA-125 / DSM 18197 / FERM 7344 / JCM 9153 / C-125) (Bacillus halodurans).